Here is a 248-residue protein sequence, read N- to C-terminus: 2,3-bisphosphoglycerate-dependent phosphoglycerate mutase 2 (248 aa).

Residues 8–15 (RHGESAWN), 21–22 (TG), Arg-60, 87–90 (EKHY), Lys-98, 114–115 (RR), and 183–184 (GN) contribute to the substrate site. The active-site Tele-phosphohistidine intermediate is the His-9. The Proton donor/acceptor role is filled by Glu-87.

This sequence belongs to the phosphoglycerate mutase family. BPG-dependent PGAM subfamily.

It carries out the reaction (2R)-2-phosphoglycerate = (2R)-3-phosphoglycerate. It participates in carbohydrate degradation; glycolysis; pyruvate from D-glyceraldehyde 3-phosphate: step 3/5. In terms of biological role, catalyzes the interconversion of 2-phosphoglycerate and 3-phosphoglycerate. The polypeptide is 2,3-bisphosphoglycerate-dependent phosphoglycerate mutase 2 (Bacteroides thetaiotaomicron (strain ATCC 29148 / DSM 2079 / JCM 5827 / CCUG 10774 / NCTC 10582 / VPI-5482 / E50)).